Reading from the N-terminus, the 597-residue chain is uncharacterized protein (597 aa).

The region spanning 16 to 78 (VGRLVWVRRR…LENSKTVKAF (63 aa)) is the PWWP domain. Disordered stretches follow at residues 126–210 (NLCN…MRGL) and 449–482 (QLKG…STPH). The span at 134–143 (EDSKRCLSGK) shows a compositional bias: basic and acidic residues. Positions 144-161 (EDEDSGSSDAEETEDDEL) are enriched in acidic residues. Residues 166–185 (EQLQSSISSQEMNNVGASKV) show a composition bias toward polar residues. Residues 450 to 460 (LKGKRNSRQMS) show a composition bias toward basic residues. Residues 461–470 (KKQEERRNVY) are compositionally biased toward basic and acidic residues.

This is an uncharacterized protein from Arabidopsis thaliana (Mouse-ear cress).